The primary structure comprises 583 residues: Pyruvate kinase isozyme A, chloroplastic (583 aa).

A chloroplast-targeting transit peptide spans 1–74 (MSQSLHFSPN…NSGVLYNNNN (74 aa)). The span at 43-52 (KASTSPSSSS) shows a compositional bias: low complexity. A disordered region spans residues 43-75 (KASTSPSSSSDPQVLVADNGTGNSGVLYNNNNK). Residues 62-75 (GTGNSGVLYNNNNK) are compositionally biased toward polar residues. R134 contacts substrate. Residues N136, D168, and T169 each coordinate K(+). 136-139 (NMCH) provides a ligand contact to ATP. E333 serves as a coordination point for Mg(2+). Positions 356, 357, and 389 each coordinate substrate. D357 contributes to the Mg(2+) binding site.

Belongs to the pyruvate kinase family. Oligomer of alpha and beta subunits. Requires Mg(2+) as cofactor. The cofactor is K(+).

It localises to the plastid. The protein localises to the chloroplast. It catalyses the reaction pyruvate + ATP = phosphoenolpyruvate + ADP + H(+). Its pathway is carbohydrate degradation; glycolysis; pyruvate from D-glyceraldehyde 3-phosphate: step 5/5. The protein is Pyruvate kinase isozyme A, chloroplastic of Ricinus communis (Castor bean).